Here is a 55-residue protein sequence, read N- to C-terminus: Trypsin inhibitor ClTI-1 (55 aa).

In terms of domain architecture, Kazal-like spans 1-55 (SIPPACDKYSRLPGCPRDYSPVCGTDGKTYPNECVLCLSNSEENKNVQIYKSGMC). Disulfide bonds link C6–C37, C15–C34, and C23–C55.

The protein resides in the secreted. Its function is as follows. Inhibits trypsin and plasmin. The polypeptide is Trypsin inhibitor ClTI-1 (Gallus gallus (Chicken)).